A 268-amino-acid chain; its full sequence is 4-hydroxy-tetrahydrodipicolinate reductase (268 aa).

NAD(+) is bound by residues 8 to 13 and glutamate 34; that span reads GAAGRM. Residue arginine 35 participates in NADP(+) binding. NAD(+)-binding positions include 96-98 and 120-123; these read GST and SPNM. The active-site Proton donor/acceptor is the histidine 153. (S)-2,3,4,5-tetrahydrodipicolinate is bound at residue histidine 154. The active-site Proton donor is the lysine 157. A (S)-2,3,4,5-tetrahydrodipicolinate-binding site is contributed by 163–164; it reads GT.

The protein belongs to the DapB family.

The protein resides in the cytoplasm. It catalyses the reaction (S)-2,3,4,5-tetrahydrodipicolinate + NAD(+) + H2O = (2S,4S)-4-hydroxy-2,3,4,5-tetrahydrodipicolinate + NADH + H(+). It carries out the reaction (S)-2,3,4,5-tetrahydrodipicolinate + NADP(+) + H2O = (2S,4S)-4-hydroxy-2,3,4,5-tetrahydrodipicolinate + NADPH + H(+). The protein operates within amino-acid biosynthesis; L-lysine biosynthesis via DAP pathway; (S)-tetrahydrodipicolinate from L-aspartate: step 4/4. Catalyzes the conversion of 4-hydroxy-tetrahydrodipicolinate (HTPA) to tetrahydrodipicolinate. The chain is 4-hydroxy-tetrahydrodipicolinate reductase from Anaeromyxobacter sp. (strain Fw109-5).